An 876-amino-acid polypeptide reads, in one-letter code: Alanine--tRNA ligase (876 aa).

Zn(2+) contacts are provided by His565, His569, Cys667, and His671.

This sequence belongs to the class-II aminoacyl-tRNA synthetase family. Zn(2+) serves as cofactor.

It is found in the cytoplasm. The catalysed reaction is tRNA(Ala) + L-alanine + ATP = L-alanyl-tRNA(Ala) + AMP + diphosphate. In terms of biological role, catalyzes the attachment of alanine to tRNA(Ala) in a two-step reaction: alanine is first activated by ATP to form Ala-AMP and then transferred to the acceptor end of tRNA(Ala). Also edits incorrectly charged Ser-tRNA(Ala) and Gly-tRNA(Ala) via its editing domain. The protein is Alanine--tRNA ligase of Staphylococcus aureus (strain USA300).